A 278-amino-acid polypeptide reads, in one-letter code: Tyrosine-protein phosphatase pmp1 (278 aa).

Residues 60–214 (GPVCIYPPNI…LSEYQQIIRK (155 aa)) form the Tyrosine-protein phosphatase domain. The active-site Phosphocysteine intermediate is Cys158. A disordered region spans residues 217–278 (SQGPYQSSSL…SSGSISNDAS (62 aa)). Positions 252 to 278 (SPSTSESSMFTNLRRTRSSGSISNDAS) are enriched in polar residues.

The protein belongs to the protein-tyrosine phosphatase family. Non-receptor class dual specificity subfamily.

The enzyme catalyses O-phospho-L-tyrosyl-[protein] + H2O = L-tyrosyl-[protein] + phosphate. Functionally, dual specificity phosphatase that dephosphorylates MAP kinase pmk1 on a Tyr. Has a role in chloride ion homeostasis by inactivating this pmk1 MAP kinase pathway. This is Tyrosine-protein phosphatase pmp1 (pmp1) from Schizosaccharomyces pombe (strain 972 / ATCC 24843) (Fission yeast).